A 931-amino-acid polypeptide reads, in one-letter code: MAEYKDTLNLPNTSFPMKASLSVREPEMLADWQAKGIYQKIRKARVGSKRFILHDGPPYANGHLHCGHALNKILKDIIIKSKTFSGFDAPFVPGWDCHGLPIELNVEKKVGKAGSKISPREFRAKCREYAASQIDIQRDEFQRLGVLGDWYNPYVTMDYHYEANIVRALGLMIKNGHLQQGFKPVHWCIDCGSALAEAEVDYEDKTSPSIDVAFSAVNPSEFLNCFETQPAVKPLILPIWTTTPWTLPANEAVCLHPEIDYALIDAGNSYYIVATDLVESVMARYGISHYKTSGFAKGRVFEHFKLQHPFYKRQVPVVLAEHVTTESGTGCVHTAPAHGPDDYLVGQSYQLPLINPVMANGCFAENVELFAGISVLKANETILAVLSERNVLLASESIRHSYPHCWRHKSPMIFLATPQWFISMDKSNLRQAIINEIDKVNWVPDWGKARISNMVENRPDWCISRQRSWGTPMPLFVHKTTRELHPDTLELIERVAVMIEKSGIDAWFDLDSSELLGDDAKHYDKITDTMDVWLDSGISHYSVLKHNNDLDFPADVYFEGSDQHRGWFNSSLTTAVAMYGVAPYKTVLTHGYTVDAEGKKLSKSKGNYVALDKLVNQHGADILRLWVASTDYRHEVSISEEIIKRNADAYRRIRNTARFLLANLFDFNPASDCIDAKELLELDRWALKRCQLLQEEIITAYENYHFHLIYQKIHNFCAVDMGSFYLDLIKDRQYTTAKDSIARRSCQTAMYHMVKAFTIWLAPILSFTAEEIWQTIPGNNSESIFIEHWYNAWPTIDAVNMEDWEQLHIVRDEVNKALEETRQRGEIGSALAAEVTVYADAKVLPKLTRLGEELRFLFITSEAKACPISQSPKGLAVTDCGVSIQVTASVHEKCARCWHRREDVGQNQEHPELCLRCVGNISRYHEERLYI.

Residues 58-68 (PYANGHLHCGH) carry the 'HIGH' region motif. Glutamate 559 is a binding site for L-isoleucyl-5'-AMP. A 'KMSKS' region motif is present at residues 600 to 604 (KLSKS). An ATP-binding site is contributed by lysine 603. Zn(2+) is bound by residues cysteine 894, cysteine 897, cysteine 914, and cysteine 917.

Belongs to the class-I aminoacyl-tRNA synthetase family. IleS type 1 subfamily. As to quaternary structure, monomer. Zn(2+) is required as a cofactor.

The protein localises to the cytoplasm. It catalyses the reaction tRNA(Ile) + L-isoleucine + ATP = L-isoleucyl-tRNA(Ile) + AMP + diphosphate. Functionally, catalyzes the attachment of isoleucine to tRNA(Ile). As IleRS can inadvertently accommodate and process structurally similar amino acids such as valine, to avoid such errors it has two additional distinct tRNA(Ile)-dependent editing activities. One activity is designated as 'pretransfer' editing and involves the hydrolysis of activated Val-AMP. The other activity is designated 'posttransfer' editing and involves deacylation of mischarged Val-tRNA(Ile). The polypeptide is Isoleucine--tRNA ligase (Legionella pneumophila (strain Corby)).